Here is a 390-residue protein sequence, read N- to C-terminus: Protein phosphatase 1B (390 aa).

The segment covering 1-14 has biased composition (basic and acidic residues); it reads MGAFLDKPKTEKHN. The disordered stretch occupies residues 1–20; sequence MGAFLDKPKTEKHNAHGAGN. A lipid anchor (N-myristoyl glycine) is attached at Gly-2. A Glycyl lysine isopeptide (Lys-Gly) (interchain with G-Cter in ISG15) cross-link involves residue Lys-12. In terms of domain architecture, PPM-type phosphatase spans 23–295; it reads RYGLSSMQGW…DNMSVVLVCF (273 aa). Asp-60, Gly-61, Asp-243, and Asp-286 together coordinate Mn(2+). The disordered stretch occupies residues 371 to 390; that stretch reads NPHKDNDGGAGDLEDSLVAL. A Phosphoserine modification is found at Ser-386.

The protein belongs to the PP2C family. As to quaternary structure, monomer. Interacts with PAK6. Interacts with the phosphorylated form of IKBKB/IKKB. It depends on Mg(2+) as a cofactor. Mn(2+) serves as cofactor. Isgylation negatively regulates its activity. Post-translationally, N-myristoylation is essential for the recognition of its substrates for dephosphorylation. In terms of tissue distribution, isoform 1: Expressed ubiquitously. Isoform 2: Expressed exclusively in testis and intestine. Isoform 3: Expressed exclusively in brain and intestine. Isoform 4: Expressed exclusively in testis and intestine.

The protein localises to the cytoplasm. The protein resides in the cytosol. Its subcellular location is the membrane. It catalyses the reaction O-phospho-L-seryl-[protein] + H2O = L-seryl-[protein] + phosphate. The enzyme catalyses O-phospho-L-threonyl-[protein] + H2O = L-threonyl-[protein] + phosphate. Enzyme with a broad specificity. Dephosphorylates PRKAA1 and PRKAA2. Inhibits TBK1-mediated antiviral signaling by dephosphorylating it at 'Ser-172'. Plays an important role in the termination of TNF-alpha-mediated NF-kappa-B activation through dephosphorylating and inactivating IKBKB/IKKB. The sequence is that of Protein phosphatase 1B (Ppm1b) from Mus musculus (Mouse).